Here is a 397-residue protein sequence, read N- to C-terminus: MGKKKFERTKPHVNVGTVGHIDHGKTTLTAAITKQLAKRGRAEFVPFDQIDKAPEERERGITIATAHVEYETDKRHYAHVDCPGHADYIKNMITGAAQMDGAILVVAADDGPMPQTREHILLSRQVGVPYIVVFLNKVDMVDDPELIELVELELRELLSKYGFPGDDVPIIKGSALRALEADDPEHPDTKCIFELMEAIDAYVPDPVRDIDKPFLMPIEDVFSISGRGTVVTGRVERGVIRVSEDVEIVGFRPTFKTVCTGVEMFRKTLDQGQAGDNVGVLLRGTKRDEVERGQVVAKPGSITPHTKFKAEVYVLKKEEGGRHTPFFPGYRPQFYFRTTDVTGIMTLPEGVEMVMPGDNISTEVHLITPVALEKELRFAIREGGRTVGAGVITEIIE.

The region spanning 10–207 (KPHVNVGTVG…AIDAYVPDPV (198 aa)) is the tr-type G domain. A G1 region spans residues 19–26 (GHIDHGKT). Residue 19–26 (GHIDHGKT) coordinates GTP. T26 lines the Mg(2+) pocket. The interval 60 to 64 (GITIA) is G2. The tract at residues 81-84 (DCPG) is G3. GTP contacts are provided by residues 81 to 85 (DCPGH) and 136 to 139 (NKVD). The segment at 136–139 (NKVD) is G4. The G5 stretch occupies residues 174 to 176 (SAL).

This sequence belongs to the TRAFAC class translation factor GTPase superfamily. Classic translation factor GTPase family. EF-Tu/EF-1A subfamily. As to quaternary structure, monomer.

Its subcellular location is the cytoplasm. It catalyses the reaction GTP + H2O = GDP + phosphate + H(+). Functionally, GTP hydrolase that promotes the GTP-dependent binding of aminoacyl-tRNA to the A-site of ribosomes during protein biosynthesis. In Syntrophobacter fumaroxidans (strain DSM 10017 / MPOB), this protein is Elongation factor Tu.